Here is a 459-residue protein sequence, read N- to C-terminus: ATP synthase subunit beta (459 aa).

149 to 156 (GGAGVGKT) contributes to the ATP binding site.

The protein belongs to the ATPase alpha/beta chains family. In terms of assembly, F-type ATPases have 2 components, CF(1) - the catalytic core - and CF(0) - the membrane proton channel. CF(1) has five subunits: alpha(3), beta(3), gamma(1), delta(1), epsilon(1). CF(0) has three main subunits: a(1), b(2) and c(9-12). The alpha and beta chains form an alternating ring which encloses part of the gamma chain. CF(1) is attached to CF(0) by a central stalk formed by the gamma and epsilon chains, while a peripheral stalk is formed by the delta and b chains.

Its subcellular location is the cell inner membrane. The enzyme catalyses ATP + H2O + 4 H(+)(in) = ADP + phosphate + 5 H(+)(out). Functionally, produces ATP from ADP in the presence of a proton gradient across the membrane. The catalytic sites are hosted primarily by the beta subunits. The sequence is that of ATP synthase subunit beta from Pseudomonas syringae pv. syringae (strain B728a).